Consider the following 221-residue polypeptide: Prolactin-3B1 (221 aa).

Residues 1 to 30 (MQLPLTPLSFSGTLLLMAMSNFLLWEHVTS) form the signal peptide. 2 cysteine pairs are disulfide-bonded: Cys-81–Cys-196 and Cys-213–Cys-221.

This sequence belongs to the somatotropin/prolactin family.

It localises to the secreted. The chain is Prolactin-3B1 (PRL3B1) from Mesocricetus auratus (Golden hamster).